A 320-amino-acid chain; its full sequence is tRNA U34 carboxymethyltransferase (320 aa).

Residues Lys89, Trp103, Lys108, Gly128, 150 to 152 (DPT), 179 to 180 (IE), Met194, Tyr198, and Arg313 contribute to the carboxy-S-adenosyl-L-methionine site.

It belongs to the class I-like SAM-binding methyltransferase superfamily. CmoB family. As to quaternary structure, homotetramer.

The catalysed reaction is carboxy-S-adenosyl-L-methionine + 5-hydroxyuridine(34) in tRNA = 5-carboxymethoxyuridine(34) in tRNA + S-adenosyl-L-homocysteine + H(+). Its function is as follows. Catalyzes carboxymethyl transfer from carboxy-S-adenosyl-L-methionine (Cx-SAM) to 5-hydroxyuridine (ho5U) to form 5-carboxymethoxyuridine (cmo5U) at position 34 in tRNAs. The sequence is that of tRNA U34 carboxymethyltransferase from Actinobacillus pleuropneumoniae serotype 7 (strain AP76).